Here is a 528-residue protein sequence, read N- to C-terminus: GMP synthase [glutamine-hydrolyzing] (528 aa).

Residues 13–204 (SILILDFGSQ…VYKISCCAAD (192 aa)) form the Glutamine amidotransferase type-1 domain. C90 serves as the catalytic Nucleophile. Catalysis depends on residues H178 and E180. The region spanning 205–403 (WTTETYIEET…LGLPAEIIKR (199 aa)) is the GMPS ATP-PPase domain. An ATP-binding site is contributed by 232–238 (SGGVDSS).

Homodimer.

The catalysed reaction is XMP + L-glutamine + ATP + H2O = GMP + L-glutamate + AMP + diphosphate + 2 H(+). It functions in the pathway purine metabolism; GMP biosynthesis; GMP from XMP (L-Gln route): step 1/1. Catalyzes the synthesis of GMP from XMP. The chain is GMP synthase [glutamine-hydrolyzing] from Prochlorococcus marinus (strain MIT 9215).